A 344-amino-acid chain; its full sequence is Polyhomeotic-like protein 2 (344 aa).

Positions Met-1 to Glu-23 are enriched in polar residues. Residues Met-1 to Gln-28 form a disordered region. Residues Lys-25–Pro-53 carry the HD1 motif. Residues Gly-114–Lys-148 form an FCS-type zinc finger. Zn(2+) contacts are provided by Cys-123, Cys-126, Cys-142, and Cys-146. The segment at Arg-165–Ser-269 is disordered. Residues Val-173 to Lys-183 are compositionally biased toward basic residues. Over residues Lys-216–Tyr-233 the composition is skewed to polar residues. Over residues Glu-234–Arg-248 the composition is skewed to low complexity. The SAM domain maps to Trp-280–Ser-344.

Component of a PRC1-like complex.

Its subcellular location is the nucleus. Its function is as follows. Component of a Polycomb group (PcG) multiprotein PRC1-like complex, a complex class required to maintain the transcriptionally repressive state of many genes, including Hox genes, throughout development. PcG PRC1 complex acts via chromatin remodeling and modification of histones; it mediates monoubiquitination of histone H2A 'Lys-119', rendering chromatin heritably changed in its expressibility. This chain is Polyhomeotic-like protein 2 (phc2), found in Xenopus laevis (African clawed frog).